The following is a 132-amino-acid chain: Intraflagellar transport protein 20 homolog A (132 aa).

The stretch at 87 to 112 (EAQQQQLYALIAEKKMQLERYRIEYD) forms a coiled coil.

The protein resides in the golgi apparatus. It is found in the cis-Golgi network. Its subcellular location is the cytoplasm. It localises to the cytoskeleton. The protein localises to the microtubule organizing center. The protein resides in the centrosome. It is found in the centriole. Its subcellular location is the cell projection. It localises to the cilium. Functionally, involved in ciliary process assembly. May play a role in the trafficking of ciliary membrane proteins from the Golgi complex to the cilium. Regulates the platelet-derived growth factor receptor-alpha (PDGFRA) signaling pathway. Plays an important role in spermatogenesis, particularly spermiogenesis, when germ cells form flagella. In Xenopus laevis (African clawed frog), this protein is Intraflagellar transport protein 20 homolog A (ift20-a).